Here is a 359-residue protein sequence, read N- to C-terminus: PWWP domain-containing protein 1 (359 aa).

Residues 1–37 (MNNARTNAKRRRLSSKQGGLSISEGKESNIPSVVEES) are disordered. One can recognise a PWWP domain in the interval 52–114 (FGDRILVKAP…RNSVKPLLDS (63 aa)). 2 disordered regions span residues 133-161 (AYEA…AAEE) and 204-255 (VAST…SPLN). Polar residues predominate over residues 204–224 (VASTSRSSTQLSDQRYPLSSN). Phosphoserine is present on S252.

In terms of assembly, interacts with set9 and histone H4K20me1. Associates with nucleosomes.

The protein localises to the nucleus. In terms of biological role, necessary for DNA damage checkpoint activation. Required for the association of set9 with chromatin and subsequent methylation of H4K20. Associates with H4K20me1 to increase the concentration of set9 on chromatin to perform H4K20me3. H4K20me3 is mainly enriched at heterochromatin and is required for proper heterochromatin assembly. The chain is PWWP domain-containing protein 1 (pdp1) from Schizosaccharomyces pombe (strain 972 / ATCC 24843) (Fission yeast).